Here is a 261-residue protein sequence, read N- to C-terminus: F-actin-capping protein subunit alpha (261 aa).

The protein belongs to the F-actin-capping protein alpha subunit family. In terms of assembly, heterodimer of an alpha and a beta subunit.

F-actin-capping proteins bind in a Ca(2+)-independent manner to the fast growing ends of actin filaments (barbed end) thereby blocking the exchange of subunits at these ends. Unlike other capping proteins (such as gelsolin and severin), these proteins do not sever actin filaments. In Eremothecium gossypii (strain ATCC 10895 / CBS 109.51 / FGSC 9923 / NRRL Y-1056) (Yeast), this protein is F-actin-capping protein subunit alpha (CAP1).